Here is a 225-residue protein sequence, read N- to C-terminus: Thymidylate kinase (225 aa).

Position 15-22 (15-22) interacts with ATP; the sequence is GGEGSGKS.

It belongs to the thymidylate kinase family.

The enzyme catalyses dTMP + ATP = dTDP + ADP. Functionally, phosphorylation of dTMP to form dTDP in both de novo and salvage pathways of dTTP synthesis. This chain is Thymidylate kinase, found in Protochlamydia amoebophila (strain UWE25).